The chain runs to 439 residues: 26S proteasome regulatory subunit 6A (439 aa).

An N-acetylmethionine modification is found at Met-1. Position 9 is a phosphoserine (Ser-9). Position 227-234 (227-234 (GPPGTGKT)) interacts with ATP. Ser-376 is modified (phosphoserine).

It belongs to the AAA ATPase family. As to quaternary structure, component of the 19S proteasome regulatory particle complex. The 26S proteasome consists of a 20S core particle (CP) and two 19S regulatory subunits (RP). The regulatory particle is made of a lid composed of 9 subunits, a base containing 6 ATPases including PSMC3 and few additional components. Interacts with PAAF1. (Microbial infection) Interacts with HIV-1 Tat. Sumoylated by UBE2I in response to MEKK1-mediated stimuli.

The protein resides in the cytoplasm. It localises to the nucleus. Component of the 26S proteasome, a multiprotein complex involved in the ATP-dependent degradation of ubiquitinated proteins. This complex plays a key role in the maintenance of protein homeostasis by removing misfolded or damaged proteins, which could impair cellular functions, and by removing proteins whose functions are no longer required. Therefore, the proteasome participates in numerous cellular processes, including cell cycle progression, apoptosis, or DNA damage repair. PSMC3 belongs to the heterohexameric ring of AAA (ATPases associated with diverse cellular activities) proteins that unfolds ubiquitinated target proteins that are concurrently translocated into a proteolytic chamber and degraded into peptides. In Homo sapiens (Human), this protein is 26S proteasome regulatory subunit 6A (PSMC3).